Reading from the N-terminus, the 351-residue chain is Minor outer capsid protein P9 (351 aa).

The segment at 246 to 308 (GVPAALPQPD…KAVPSGNVSA (63 aa)) is disordered. Basic and acidic residues predominate over residues 285–297 (MIRKKVETSKDAP).

Belongs to the phytoreovirus minor outer capsid protein P9 family.

It localises to the virion. It is found in the host cytoplasm. Functionally, minor outer capsid protein. In Rice dwarf virus (isolate O) (RDV), this protein is Minor outer capsid protein P9.